The following is a 79-amino-acid chain: UPF0349 protein GTNG_2908 (79 aa).

The protein belongs to the UPF0349 family.

This chain is UPF0349 protein GTNG_2908, found in Geobacillus thermodenitrificans (strain NG80-2).